The primary structure comprises 150 residues: UPF0756 membrane protein ACICU_02320 (150 aa).

The next 4 helical transmembrane spans lie at 1 to 21 (MLAQ…CGLL), 45 to 65 (FFPY…TIGV), 83 to 103 (FISF…WLGG), and 115 to 135 (VVAG…GVPV).

The protein belongs to the UPF0756 family.

The protein resides in the cell membrane. The chain is UPF0756 membrane protein ACICU_02320 from Acinetobacter baumannii (strain ACICU).